Reading from the N-terminus, the 392-residue chain is Xylose operon regulatory protein (392 aa).

The region spanning 288–386 is the HTH araC/xylS-type domain; it reads IQAMHYIRNH…DTTPKEYRDV (99 aa). 2 DNA-binding regions (H-T-H motif) span residues 305–326 and 353–376; these read DQVL…KEEV and INEI…KKAY.

Regulatory protein for the xylBAFGHR operon. This is Xylose operon regulatory protein (xylR) from Escherichia coli O157:H7.